A 547-amino-acid polypeptide reads, in one-letter code: Probable ATP-dependent RNA helicase DDX56 (547 aa).

Residues Leu-7–Glu-35 carry the Q motif motif. A Helicase ATP-binding domain is found at Ile-38–Leu-218. An ATP-binding site is contributed by Ala-51 to Thr-58. Ser-126 is modified (phosphoserine). Phosphothreonine is present on Thr-141. The short motif at Asp-166–Asp-169 is the DEAD box element. A Helicase C-terminal domain is found at Gln-230–Glu-424. Basic residues-rich tracts occupy residues Arg-506–Lys-525 and Ser-532–Ser-547. The tract at residues Arg-506–Ser-547 is disordered. A Phosphoserine modification is found at Ser-532.

It belongs to the DEAD box helicase family. DDX56/DBP9 subfamily. In terms of assembly, may form homooligomeric complexes. Interacts with IRF3. Interacts with OCT4 and POU5F1. (Microbial infection) Interacts with West Nile virus capsid protein C. As to quaternary structure, (Microbial infection) Interacts with foot-and-mouth disease virus protein 3A; this interaction leads to inhibition of type I interferon production. In terms of assembly, (Microbial infection) Interacts with EMCV protein 3C; this interaction leads to inhibition of type I interferon production. As to expression, detected in heart, brain, liver, pancreas, placenta and lung.

The protein resides in the nucleus. Its subcellular location is the nucleolus. It carries out the reaction ATP + H2O = ADP + phosphate + H(+). Nucleolar RNA helicase that plays a role in various biological processes including innate immunity, ribosome biogenesis or nucleolus organization. Plays an essential role in maintaining nucleolar integrity in planarian stem cells. Maintains embryonic stem cells proliferation by conventional regulation of ribosome assembly and interaction with OCT4 and POU5F1 complex. Regulates antiviral innate immunity by inhibiting the virus-triggered signaling nuclear translocation of IRF3. Mechanistically, acts by disrupting the interaction between IRF3 and importin IPO5. May play a role in later stages of the processing of the pre-ribosomal particles leading to mature 60S ribosomal subunits. Has intrinsic ATPase activity. Its function is as follows. (Microbial infection) Helicase activity is important for packaging viral RNA into virions during West Nile virus infection. Functionally, (Microbial infection) Plays a positive role in foot-and-mouth disease virus replication by inhibiting the phosphorylation of IRF3 leading to inhibition of type I interferon. In terms of biological role, (Microbial infection) Plays a positive role in EMCV replication by interrupting IRF3 phosphorylation and its nucleus translocation. The protein is Probable ATP-dependent RNA helicase DDX56 (DDX56) of Homo sapiens (Human).